Here is a 292-residue protein sequence, read N- to C-terminus: NAD kinase (292 aa).

Asp-73 functions as the Proton acceptor in the catalytic mechanism. Residues 73–74, 147–148, His-158, Arg-175, Asp-177, 188–193, and Gln-247 each bind NAD(+); these read DG, NE, and TAYSLS.

This sequence belongs to the NAD kinase family. Requires a divalent metal cation as cofactor.

The protein resides in the cytoplasm. It catalyses the reaction NAD(+) + ATP = ADP + NADP(+) + H(+). Functionally, involved in the regulation of the intracellular balance of NAD and NADP, and is a key enzyme in the biosynthesis of NADP. Catalyzes specifically the phosphorylation on 2'-hydroxyl of the adenosine moiety of NAD to yield NADP. The chain is NAD kinase from Photorhabdus laumondii subsp. laumondii (strain DSM 15139 / CIP 105565 / TT01) (Photorhabdus luminescens subsp. laumondii).